A 74-amino-acid chain; its full sequence is NAD(P)H-quinone oxidoreductase subunit O (74 aa).

Belongs to the complex I NdhO subunit family. As to quaternary structure, NDH-1 can be composed of about 15 different subunits; different subcomplexes with different compositions have been identified which probably have different functions.

The protein resides in the cellular thylakoid membrane. It catalyses the reaction a plastoquinone + NADH + (n+1) H(+)(in) = a plastoquinol + NAD(+) + n H(+)(out). The catalysed reaction is a plastoquinone + NADPH + (n+1) H(+)(in) = a plastoquinol + NADP(+) + n H(+)(out). Functionally, NDH-1 shuttles electrons from an unknown electron donor, via FMN and iron-sulfur (Fe-S) centers, to quinones in the respiratory and/or the photosynthetic chain. The immediate electron acceptor for the enzyme in this species is believed to be plastoquinone. Couples the redox reaction to proton translocation, and thus conserves the redox energy in a proton gradient. Cyanobacterial NDH-1 also plays a role in inorganic carbon-concentration. The sequence is that of NAD(P)H-quinone oxidoreductase subunit O from Synechococcus sp. (strain RCC307).